The following is an 892-amino-acid chain: Alanine--tRNA ligase (892 aa).

The Zn(2+) site is built by H594, H598, C702, and H706.

It belongs to the class-II aminoacyl-tRNA synthetase family. Zn(2+) is required as a cofactor.

It localises to the cytoplasm. The enzyme catalyses tRNA(Ala) + L-alanine + ATP = L-alanyl-tRNA(Ala) + AMP + diphosphate. Functionally, catalyzes the attachment of alanine to tRNA(Ala) in a two-step reaction: alanine is first activated by ATP to form Ala-AMP and then transferred to the acceptor end of tRNA(Ala). Also edits incorrectly charged Ser-tRNA(Ala) and Gly-tRNA(Ala) via its editing domain. This is Alanine--tRNA ligase from Pyrobaculum arsenaticum (strain DSM 13514 / JCM 11321 / PZ6).